The sequence spans 199 residues: ATP-dependent Clp protease proteolytic subunit (199 aa).

Residue S103 is the Nucleophile of the active site. H128 is an active-site residue.

It belongs to the peptidase S14 family. Fourteen ClpP subunits assemble into 2 heptameric rings which stack back to back to give a disk-like structure with a central cavity, resembling the structure of eukaryotic proteasomes.

It is found in the cytoplasm. It catalyses the reaction Hydrolysis of proteins to small peptides in the presence of ATP and magnesium. alpha-casein is the usual test substrate. In the absence of ATP, only oligopeptides shorter than five residues are hydrolyzed (such as succinyl-Leu-Tyr-|-NHMec, and Leu-Tyr-Leu-|-Tyr-Trp, in which cleavage of the -Tyr-|-Leu- and -Tyr-|-Trp bonds also occurs).. In terms of biological role, cleaves peptides in various proteins in a process that requires ATP hydrolysis. Has a chymotrypsin-like activity. Plays a major role in the degradation of misfolded proteins. This is ATP-dependent Clp protease proteolytic subunit from Photobacterium profundum (strain SS9).